We begin with the raw amino-acid sequence, 427 residues long: Serine--tRNA ligase (427 aa).

233–235 (TAE) serves as a coordination point for L-serine. 264–266 (RSE) is a binding site for ATP. Glu-287 serves as a coordination point for L-serine. 351 to 354 (EISS) contributes to the ATP binding site. An L-serine-binding site is contributed by Ser-386.

The protein belongs to the class-II aminoacyl-tRNA synthetase family. Type-1 seryl-tRNA synthetase subfamily. As to quaternary structure, homodimer. The tRNA molecule binds across the dimer.

It is found in the cytoplasm. It carries out the reaction tRNA(Ser) + L-serine + ATP = L-seryl-tRNA(Ser) + AMP + diphosphate + H(+). The catalysed reaction is tRNA(Sec) + L-serine + ATP = L-seryl-tRNA(Sec) + AMP + diphosphate + H(+). Its pathway is aminoacyl-tRNA biosynthesis; selenocysteinyl-tRNA(Sec) biosynthesis; L-seryl-tRNA(Sec) from L-serine and tRNA(Sec): step 1/1. In terms of biological role, catalyzes the attachment of serine to tRNA(Ser). Is also able to aminoacylate tRNA(Sec) with serine, to form the misacylated tRNA L-seryl-tRNA(Sec), which will be further converted into selenocysteinyl-tRNA(Sec). The chain is Serine--tRNA ligase from Dechloromonas aromatica (strain RCB).